A 188-amino-acid chain; its full sequence is Peptidyl-tRNA hydrolase (188 aa).

Position 14 (Y14) interacts with tRNA. The active-site Proton acceptor is H19. The tRNA site is built by Y64, N66, and N112.

Belongs to the PTH family. Monomer.

It is found in the cytoplasm. It catalyses the reaction an N-acyl-L-alpha-aminoacyl-tRNA + H2O = an N-acyl-L-amino acid + a tRNA + H(+). Hydrolyzes ribosome-free peptidyl-tRNAs (with 1 or more amino acids incorporated), which drop off the ribosome during protein synthesis, or as a result of ribosome stalling. Functionally, catalyzes the release of premature peptidyl moieties from peptidyl-tRNA molecules trapped in stalled 50S ribosomal subunits, and thus maintains levels of free tRNAs and 50S ribosomes. The polypeptide is Peptidyl-tRNA hydrolase (Clostridium novyi (strain NT)).